An 834-amino-acid polypeptide reads, in one-letter code: Semaphorin-4C (834 aa).

An N-terminal signal peptide occupies residues 1–20 (MAPHWAVWLLAAGLWGLGIG). At 21 to 664 (AEMWWNLVPR…EARAPLENLG (644 aa)) the chain is on the extracellular side. One can recognise a Sema domain in the interval 30-497 (RKTVSSGELV…SRSQLVQLSL (468 aa)). The tract at residues 46-489 (SQTGIQDFLT…SKKVLFAGSR (444 aa)) is dominant negative effect on myogenic differentiation. Cysteine 99 and cysteine 110 are disulfide-bonded. 2 N-linked (GlcNAc...) asparagine glycosylation sites follow: asparagine 106 and asparagine 121. 3 disulfide bridges follow: cysteine 128-cysteine 137, cysteine 261-cysteine 370, and cysteine 285-cysteine 330. Residues asparagine 310 and asparagine 419 are each glycosylated (N-linked (GlcNAc...) asparagine). The region spanning 499–552 (DCTKYRFCVDCVLARDPYCAWNVNTSRCVATTSGRSGSFLVQHVANLDTSKMCN) is the PSI domain. 2 disulfide bridges follow: cysteine 500–cysteine 517 and cysteine 509–cysteine 526. N-linked (GlcNAc...) asparagine glycosylation is found at asparagine 522 and asparagine 565. One can recognise an Ig-like C2-type domain in the interval 557-645 (KKVRSIPKNI…RLAAESYLVA (89 aa)). Cysteine 578 and cysteine 628 are joined by a disulfide. A helical transmembrane segment spans residues 665–685 (LVWLAVVALGAVCLVLLLLVL). Over 686-834 (SLRRRLREEL…PDSNPEESSV (149 aa)) the chain is Cytoplasmic. The residue at position 743 (serine 743) is a Phosphoserine. The segment at 749–834 (GHARCQPGGG…PDSNPEESSV (86 aa)) is disordered. A compositionally biased stretch (pro residues) spans 757–773 (GGPPSPPPGIPGQPLPS). The short motif at 831–834 (ESSV) is the PDZ-binding element.

It belongs to the semaphorin family. As to quaternary structure, interacts (via the PDZ-binding motif) with GIPC (via the PDZ domain). Interacts with NCDN. Interacts (via the PDZ-binding motif) with DLG4. Interacts with PLXNB2. In terms of tissue distribution, predominantly expressed in brain (at protein level).

It is found in the postsynaptic density membrane. The protein resides in the cytoplasmic vesicle. It localises to the secretory vesicle. The protein localises to the synaptic vesicle membrane. Cell surface receptor for PLXNB2 that plays an important role in cell-cell signaling. PLXNB2 binding promotes downstream activation of RHOA and phosphorylation of ERBB2 at 'Tyr-1248'. Required for normal brain development, axon guidance and cell migration. Probable signaling receptor which may play a role in myogenic differentiation through activation of the stress-activated MAPK cascade. This chain is Semaphorin-4C (Sema4c), found in Mus musculus (Mouse).